A 100-amino-acid polypeptide reads, in one-letter code: Aspartyl/glutamyl-tRNA(Asn/Gln) amidotransferase subunit C (100 aa).

The protein belongs to the GatC family. As to quaternary structure, heterotrimer of A, B and C subunits.

The catalysed reaction is L-glutamyl-tRNA(Gln) + L-glutamine + ATP + H2O = L-glutaminyl-tRNA(Gln) + L-glutamate + ADP + phosphate + H(+). It catalyses the reaction L-aspartyl-tRNA(Asn) + L-glutamine + ATP + H2O = L-asparaginyl-tRNA(Asn) + L-glutamate + ADP + phosphate + 2 H(+). Its function is as follows. Allows the formation of correctly charged Asn-tRNA(Asn) or Gln-tRNA(Gln) through the transamidation of misacylated Asp-tRNA(Asn) or Glu-tRNA(Gln) in organisms which lack either or both of asparaginyl-tRNA or glutaminyl-tRNA synthetases. The reaction takes place in the presence of glutamine and ATP through an activated phospho-Asp-tRNA(Asn) or phospho-Glu-tRNA(Gln). In Rickettsia typhi (strain ATCC VR-144 / Wilmington), this protein is Aspartyl/glutamyl-tRNA(Asn/Gln) amidotransferase subunit C.